The primary structure comprises 120 residues: NAD(P)H-quinone oxidoreductase subunit 3 (120 aa).

Helical transmembrane passes span Phe-2 to Val-22, Met-64 to Val-84, and Leu-89 to Val-109.

It belongs to the complex I subunit 3 family. NDH-1 can be composed of about 15 different subunits; different subcomplexes with different compositions have been identified which probably have different functions.

Its subcellular location is the cellular thylakoid membrane. The catalysed reaction is a plastoquinone + NADH + (n+1) H(+)(in) = a plastoquinol + NAD(+) + n H(+)(out). The enzyme catalyses a plastoquinone + NADPH + (n+1) H(+)(in) = a plastoquinol + NADP(+) + n H(+)(out). Its function is as follows. NDH-1 shuttles electrons from an unknown electron donor, via FMN and iron-sulfur (Fe-S) centers, to quinones in the respiratory and/or the photosynthetic chain. The immediate electron acceptor for the enzyme in this species is believed to be plastoquinone. Couples the redox reaction to proton translocation, and thus conserves the redox energy in a proton gradient. Cyanobacterial NDH-1 also plays a role in inorganic carbon-concentration. The protein is NAD(P)H-quinone oxidoreductase subunit 3 (ndhC) of Synechocystis sp. (strain ATCC 27184 / PCC 6803 / Kazusa).